Here is a 272-residue protein sequence, read N- to C-terminus: MICOS complex subunit MIC27 (272 aa).

The N-terminal 24 residues, 1–24 (MAAKVARLAAAASSLPFVCAVYAE), are a transit peptide targeting the mitochondrion. Residues 28–107 (SKSQLVKPKQ…YVYLKNPPPD (80 aa)) lie on the Mitochondrial intermembrane side of the membrane. Residues 108-126 (FLPRVGIITISGLAGVVLA) traverse the membrane as a helical segment. Residues 127-134 (RKDSRFKK) are Mitochondrial matrix-facing. Residues 135-152 (IAYPLGLTTLGISVCYPA) traverse the membrane as a helical segment. Over 153–272 (QAVVIAKITG…EDVDMYSTRS (120 aa)) the chain is Mitochondrial intermembrane. The disordered stretch occupies residues 187–272 (SKLQQESKSV…EDVDMYSTRS (86 aa)). 2 stretches are compositionally biased toward polar residues: residues 188–198 (KLQQESKSVTQ) and 206–245 (ISNVQFESAIESRSSNRTESSPIESWSTKDPLPSSGTVKT).

It belongs to the apolipoprotein O/MICOS complex subunit Mic27 family. In terms of assembly, component of the mitochondrial contact site and cristae organizing system (MICOS) complex (also known as MINOS or MitOS complex).

The protein localises to the mitochondrion inner membrane. Its function is as follows. Component of the MICOS complex, a large protein complex of the mitochondrial inner membrane that plays crucial roles in the maintenance of crista junctions, inner membrane architecture, and formation of contact sites to the outer membrane. This Gallus gallus (Chicken) protein is MICOS complex subunit MIC27 (APOOL).